The chain runs to 813 residues: MNEYNFSDIEKSTQEYWRKNDTFKTIEDNTKEKFYCLSMLPYPSGTLHMGHVRNYTIGDVIARYQKMQGKNVLHPMGWDAFGLPAENAAIKHKKSPYEWTKSNIAYMRSQFDSLGFSFDWSREITTCDEDYYKWEQWFFIQLYKKGLAYRKNSVVNWDPVDQTVLANEQVVDGRGWRSGALVEKKEIPQWFLKITDYADELLQDINKLDNWPEAVKTMQINWIGKSKGLTVKFKVKDSNQEIEVFTTRPDTLMGVNYLGIAPEHPLALKEAKSNSQLAAFIEECKKTSTMEADLATQEKKGFKTSIKVIHPISAETIDVWVANFVLMGYGSGAVMSVPAHDQRDWEFAQKYNIPLKQVIESNDNKLKIDLEKQAFTEKGILINSGEFDGLNFKNAYQAIKKYLTEQNKGYETTNFRIHDWGISRQRYWGCPIPMIHCDDCGAVPEKEENLPVRLPTDVALTEAGSPLKDIPEFINVACPECGKPAKRETDTFDTFFESSWYYARYTCPTANQMLDQEANYWLPVDKYIGGIEHAIMHLLYARFFHKLMRDQGLVKSDEPFKNLLTQGMVLKDGAKMSKSKGNIVDPQELIDKYGADTVRLFSMFAAPPEQSLEWSETGVEGANKFLRKVFNYAELNKVIFAKNITLESQKLTKEDKKARFEIHSNLKQAIFDFDKSQFNTVVSACMKILNTLNNYDNLSESVKVEGFSILLRILAPFTPHLCHYLWQQLNLGEDILHTSFPTVDNNALEKDEFLLVVQINGKLKAKLELDASLSSNQVEEVVLADEHVKSFIDNKQVVKVIYVPQKLINIVIK.

The short motif at 41–51 (PYPSGTLHMGH) is the 'HIGH' region element. The 'KMSKS' region motif lies at 575 to 579 (KMSKS). Position 578 (K578) interacts with ATP.

Belongs to the class-I aminoacyl-tRNA synthetase family.

It is found in the cytoplasm. It carries out the reaction tRNA(Leu) + L-leucine + ATP = L-leucyl-tRNA(Leu) + AMP + diphosphate. This is Leucine--tRNA ligase from Francisella tularensis subsp. tularensis (strain FSC 198).